Consider the following 91-residue polypeptide: Antitoxin RelJ (91 aa).

The protein belongs to the phD/YefM antitoxin family. Homodimer.

Functionally, antitoxin component of a type II toxin-antitoxin (TA) system. A probable antitoxin for the putative mRNA interferase RelK. This Mycobacterium tuberculosis (strain CDC 1551 / Oshkosh) protein is Antitoxin RelJ (relJ).